Reading from the N-terminus, the 348-residue chain is Galactose-1-phosphate uridylyltransferase (348 aa).

Residue 28–31 (RAKR) participates in UDP-alpha-D-glucose binding. Positions 52 and 55 each coordinate Zn(2+). UDP-alpha-D-glucose is bound by residues Val61 and 77-78 (ND). His115 lines the Zn(2+) pocket. Residues Asn153 and 159 to 161 (GCS) contribute to the UDP-alpha-D-glucose site. His164 is a Zn(2+) binding site. His166 acts as the Tele-UMP-histidine intermediate in catalysis. Position 168 (Gln168) interacts with UDP-alpha-D-glucose. Positions 182, 281, 296, and 298 each coordinate Fe cation. Residues 311–312 (KF), 316–317 (YE), and Gln323 each bind UDP-alpha-D-glucose.

The protein belongs to the galactose-1-phosphate uridylyltransferase type 1 family. Homodimer. Zn(2+) serves as cofactor.

It carries out the reaction alpha-D-galactose 1-phosphate + UDP-alpha-D-glucose = alpha-D-glucose 1-phosphate + UDP-alpha-D-galactose. The protein operates within carbohydrate metabolism; galactose metabolism. The chain is Galactose-1-phosphate uridylyltransferase (galT) from Escherichia coli (strain K12).